Consider the following 296-residue polypeptide: 4-hydroxy-tetrahydrodipicolinate synthase (296 aa).

T49 contacts pyruvate. The active-site Proton donor/acceptor is Y137. The Schiff-base intermediate with substrate role is filled by K166. I208 provides a ligand contact to pyruvate.

It belongs to the DapA family. Homotetramer; dimer of dimers.

Its subcellular location is the cytoplasm. The enzyme catalyses L-aspartate 4-semialdehyde + pyruvate = (2S,4S)-4-hydroxy-2,3,4,5-tetrahydrodipicolinate + H2O + H(+). Its pathway is amino-acid biosynthesis; L-lysine biosynthesis via DAP pathway; (S)-tetrahydrodipicolinate from L-aspartate: step 3/4. Catalyzes the condensation of (S)-aspartate-beta-semialdehyde [(S)-ASA] and pyruvate to 4-hydroxy-tetrahydrodipicolinate (HTPA). In Chlorobaculum parvum (strain DSM 263 / NCIMB 8327) (Chlorobium vibrioforme subsp. thiosulfatophilum), this protein is 4-hydroxy-tetrahydrodipicolinate synthase.